A 479-amino-acid chain; its full sequence is Auxin transporter-like protein 1 (479 aa).

Residues Met1 to Gln58 are Cytoplasmic-facing. Residues Val59–Ile76 traverse the membrane as a helical segment. The Extracellular segment spans residues Ser77–Gly78. Residues Ile79–Leu99 form a helical membrane-spanning segment. Topologically, residues Tyr100 to Lys134 are cytoplasmic. Residues Ala135 to Ala155 form a helical membrane-spanning segment. At Cys156 to Thr171 the chain is on the extracellular side. The chain crosses the membrane as a helical span at residues Trp172–Tyr192. Residues Arg193 to Trp195 are Cytoplasmic-facing. The chain crosses the membrane as a helical span at residues Ser196–Val216. Residues His217–Met231 are Extracellular-facing. The chain crosses the membrane as a helical span at residues Val232–Val252. At Glu253 to Lys265 the chain is on the cytoplasmic side. The helical transmembrane segment at Ala266 to Val286 threads the bilayer. Over Tyr287–Gly313 the chain is Extracellular. Residues Val314–Phe334 form a helical membrane-spanning segment. The Cytoplasmic segment spans residues Val335–Arg355. Residues Leu356–Asn376 form a helical membrane-spanning segment. Ser377 is a topological domain (extracellular). A helical membrane pass occupies residues Ala378 to Leu398. Residues Thr399–Thr421 lie on the Cytoplasmic side of the membrane. Residues Leu422 to Gly442 traverse the membrane as a helical segment. Residues Gly443 to His479 are Extracellular-facing. N-linked (GlcNAc...) asparagine glycosylation is present at Asn474.

This sequence belongs to the amino acid/polyamine transporter 2 family. Amino acid/auxin permease (AAAP) (TC 2.A.18.1) subfamily. In terms of tissue distribution, shoots and roots of nodulating plants. Higher levels in roots, flowers and stems, lower in nodules, leaves, petioles and shoot apices.

Its subcellular location is the cell membrane. Functionally, carrier protein involved in proton-driven auxin influx. Mediates the formation of auxin gradient from developing leaves (site of auxin biosynthesis) to tips by contributing to the loading of auxin in vascular tissues and facilitating acropetal (base to tip) auxin transport within inner tissues of the root apex, and basipetal (tip to base) auxin transport within outer tissues of the root apex. May be involved in lateral roots and nodules formation. The sequence is that of Auxin transporter-like protein 1 (LAX1) from Medicago truncatula (Barrel medic).